The following is a 626-amino-acid chain: Mitogen-activated protein kinase kinase kinase 3 (626 aa).

One can recognise a PB1 domain in the interval 44–123 (DVRIKFEHNG…KSLRILLLSQ (80 aa)). Disordered stretches follow at residues 125-184 (RNHT…YVPE) and 218-273 (SSAE…VKGG). Composition is skewed to polar residues over residues 128-137 (TSSSPHSGVS), 144-155 (PSQSAGDINTIY), 165-174 (LSVSSQNPGR), and 219-247 (SAENSLSGSCQSLDRSADSPSFRKSQMSR). A phosphoserine mark is found at Ser-147 and Ser-166. Phosphoserine occurs at positions 250 and 312. The segment covering 250 to 270 (SFPDNRKECSDRETQLYDKGV) has biased composition (basic and acidic residues). Ser-337 is modified (phosphoserine; by SGK1). Ser-340 bears the Phosphoserine mark. The 261-residue stretch at 362–622 (WRRGKLLGQG…AEELLTHHFA (261 aa)) folds into the Protein kinase domain. ATP is bound by residues 368-376 (LGQGAFGRV) and Lys-391. Asp-489 (proton acceptor) is an active-site residue.

It belongs to the protein kinase superfamily. STE Ser/Thr protein kinase family. MAP kinase kinase kinase subfamily. As to quaternary structure, binds both upstream activators and downstream substrates in multimolecular complexes. Part of a complex with MAP2K3, RAC1 and CCM2. Interacts with MAP2K5 and SPAG9. The cofactor is Mg(2+). Post-translationally, phosphorylation at Ser-166 and Ser-337 by SGK1 inhibits its activity.

It catalyses the reaction L-seryl-[protein] + ATP = O-phospho-L-seryl-[protein] + ADP + H(+). The enzyme catalyses L-threonyl-[protein] + ATP = O-phospho-L-threonyl-[protein] + ADP + H(+). Its activity is regulated as follows. Activated by phosphorylation on Thr-530. Functionally, component of a protein kinase signal transduction cascade. Mediates activation of the NF-kappa-B, AP1 and DDIT3 transcriptional regulators. The sequence is that of Mitogen-activated protein kinase kinase kinase 3 (Map3k3) from Mus musculus (Mouse).